The following is a 360-amino-acid chain: Biotin synthase (360 aa).

One can recognise a Radical SAM core domain in the interval 83–315 (FCGKYFDLCT…KSFLRYCGGR (233 aa)). [4Fe-4S] cluster is bound by residues cysteine 101, cysteine 105, and cysteine 108. [2Fe-2S] cluster-binding residues include serine 145, cysteine 180, cysteine 240, and arginine 310.

Belongs to the radical SAM superfamily. Biotin synthase family. As to quaternary structure, homodimer. [4Fe-4S] cluster is required as a cofactor. It depends on [2Fe-2S] cluster as a cofactor.

The enzyme catalyses (4R,5S)-dethiobiotin + (sulfur carrier)-SH + 2 reduced [2Fe-2S]-[ferredoxin] + 2 S-adenosyl-L-methionine = (sulfur carrier)-H + biotin + 2 5'-deoxyadenosine + 2 L-methionine + 2 oxidized [2Fe-2S]-[ferredoxin]. It participates in cofactor biosynthesis; biotin biosynthesis; biotin from 7,8-diaminononanoate: step 2/2. Its function is as follows. Catalyzes the conversion of dethiobiotin (DTB) to biotin by the insertion of a sulfur atom into dethiobiotin via a radical-based mechanism. The polypeptide is Biotin synthase (Fusobacterium nucleatum subsp. nucleatum (strain ATCC 25586 / DSM 15643 / BCRC 10681 / CIP 101130 / JCM 8532 / KCTC 2640 / LMG 13131 / VPI 4355)).